Consider the following 367-residue polypeptide: MSNEADLLHGPLEDRHRDLGASFAEFGGWLMPVSYAGTVSEHNATRNAVGLFDVSHLGKALVRGTGAARFVNSALTNDLNRIGPGKAQYTLCCNESGGVIDDLIAYYVDDDEIFLVPNAANTAAVVEALQGAAPAGVTVSNLHRSYAVLAVQGPRSADVLAELGLPSDMDYMAYADTSFRQVPVRVCRTGYTGEHGYELLPPWESAGVVFDALAAAVSQAGGQPAGLGARDTLRTEMGYPLHGHELSPDISPLQARCGWAIGWKKEAFFGRDALLAEKEAGPRRLLRGLRMVGRGVLRAGLTVLVGDTPVGVTTSGTFSPTLQAGIALALIDTDADVRDGQKVTVDVRGRAATCEVVRPPFVAVKTR.

Belongs to the GcvT family. The glycine cleavage system is composed of four proteins: P, T, L and H.

The catalysed reaction is N(6)-[(R)-S(8)-aminomethyldihydrolipoyl]-L-lysyl-[protein] + (6S)-5,6,7,8-tetrahydrofolate = N(6)-[(R)-dihydrolipoyl]-L-lysyl-[protein] + (6R)-5,10-methylene-5,6,7,8-tetrahydrofolate + NH4(+). Functionally, the glycine cleavage system catalyzes the degradation of glycine. In Mycobacterium avium (strain 104), this protein is Aminomethyltransferase.